A 356-amino-acid chain; its full sequence is Gluconolactonase (356 aa).

Residues 1 to 35 (MTTGRMSRRECLSAAVMVPIAAMTATATITGSAQA) constitute a signal peptide (tat-type signal).

In terms of assembly, homodimer. In terms of processing, predicted to be exported by the Tat system. The position of the signal peptide cleavage has been experimentally proven.

The protein resides in the periplasm. The catalysed reaction is D-glucono-1,5-lactone + H2O = D-gluconate + H(+). Its pathway is carbohydrate acid metabolism; D-gluconate biosynthesis; D-gluconate from D-glucono-1,5-lactone: step 1/1. Its function is as follows. Hydrolyzes the gluconolactone formed by glucose-fructose oxidoreductase, and that formed in aerobic conditions by the glucose dehydrogenase present. The protein is Gluconolactonase (gnl) of Zymomonas mobilis subsp. mobilis (strain ATCC 31821 / ZM4 / CP4).